A 315-amino-acid chain; its full sequence is GTP cyclohydrolase MptA (315 aa).

Belongs to the GTP cyclohydrolase IV family. As to quaternary structure, homodimer. It depends on Fe(2+) as a cofactor.

It carries out the reaction GTP + H2O = 7,8-dihydroneopterin 2',3'-cyclic phosphate + formate + diphosphate + H(+). It functions in the pathway cofactor biosynthesis; 5,6,7,8-tetrahydromethanopterin biosynthesis. In terms of biological role, converts GTP to 7,8-dihydro-D-neopterin 2',3'-cyclic phosphate, the first intermediate in the biosynthesis of coenzyme methanopterin. This chain is GTP cyclohydrolase MptA, found in Methanococcus maripaludis (strain C6 / ATCC BAA-1332).